A 133-amino-acid chain; its full sequence is Arsenate reductase 1 (133 aa).

Catalysis depends on nucleophile residues Cys-10, Cys-82, and Cys-89. 2 cysteine pairs are disulfide-bonded: Cys-10/Cys-82 and Cys-82/Cys-89.

This sequence belongs to the low molecular weight phosphotyrosine protein phosphatase family. Thioredoxin-coupled ArsC subfamily.

It is found in the cytoplasm. The enzyme catalyses arsenate + [thioredoxin]-dithiol + H(+) = arsenite + [thioredoxin]-disulfide + H2O. Functionally, catalyzes the reduction of arsenate [As(V)] to arsenite [As(III)]. This chain is Arsenate reductase 1, found in Staphylococcus haemolyticus (strain JCSC1435).